We begin with the raw amino-acid sequence, 270 residues long: SAGA-associated factor 29 homolog A (270 aa).

Position 2 is an N-acetylserine (S2). A disordered region spans residues 85–113; the sequence is LPSGPTGQQRRKLEGNEQKRKRMKVDTDV. Residues 95–113 show a composition bias toward basic and acidic residues; the sequence is RKLEGNEQKRKRMKVDTDV. In terms of domain architecture, SGF29 C-terminal spans 125-270; sequence EAYASLKGEQ…VVALPEGHRQ (146 aa). Histone H3K4me3 N-terminus binding stretches follow at residues 168–170 and 217–220; these read DEE and GTTA. The histone H3K4me3 binding stretch occupies residues 242–245; the sequence is FDDD.

The protein belongs to the SGF29 family. In terms of tissue distribution, expressed in roots, rosette leaves, cauline leaves, stems and flowers.

It is found in the nucleus. Functionally, chromatin reader component of the transcription regulatory histone acetylation (HAT) complex SAGA. Involved in salt stress tolerance. Enhances the effect of ADA2B in the positive regulation of salt-induced gene expression. The chain is SAGA-associated factor 29 homolog A from Arabidopsis thaliana (Mouse-ear cress).